Consider the following 427-residue polypeptide: tRNA(Ile)-lysidine synthase (427 aa).

Position 27–32 (27–32) interacts with ATP; the sequence is SGGVDS.

This sequence belongs to the tRNA(Ile)-lysidine synthase family.

Its subcellular location is the cytoplasm. The catalysed reaction is cytidine(34) in tRNA(Ile2) + L-lysine + ATP = lysidine(34) in tRNA(Ile2) + AMP + diphosphate + H(+). Functionally, ligates lysine onto the cytidine present at position 34 of the AUA codon-specific tRNA(Ile) that contains the anticodon CAU, in an ATP-dependent manner. Cytidine is converted to lysidine, thus changing the amino acid specificity of the tRNA from methionine to isoleucine. This is tRNA(Ile)-lysidine synthase from Streptococcus equi subsp. equi (strain 4047).